The primary structure comprises 193 residues: ATP-dependent Clp protease proteolytic subunit (193 aa).

S98 (nucleophile) is an active-site residue. H123 is a catalytic residue.

The protein belongs to the peptidase S14 family. In terms of assembly, fourteen ClpP subunits assemble into 2 heptameric rings which stack back to back to give a disk-like structure with a central cavity, resembling the structure of eukaryotic proteasomes.

The protein localises to the cytoplasm. The enzyme catalyses Hydrolysis of proteins to small peptides in the presence of ATP and magnesium. alpha-casein is the usual test substrate. In the absence of ATP, only oligopeptides shorter than five residues are hydrolyzed (such as succinyl-Leu-Tyr-|-NHMec, and Leu-Tyr-Leu-|-Tyr-Trp, in which cleavage of the -Tyr-|-Leu- and -Tyr-|-Trp bonds also occurs).. Functionally, cleaves peptides in various proteins in a process that requires ATP hydrolysis. Has a chymotrypsin-like activity. Plays a major role in the degradation of misfolded proteins. The polypeptide is ATP-dependent Clp protease proteolytic subunit (Haemophilus influenzae (strain 86-028NP)).